The following is a 457-amino-acid chain: Argininosuccinate lyase (457 aa).

This sequence belongs to the lyase 1 family. Argininosuccinate lyase subfamily.

The protein localises to the cytoplasm. It carries out the reaction 2-(N(omega)-L-arginino)succinate = fumarate + L-arginine. Its pathway is amino-acid biosynthesis; L-arginine biosynthesis; L-arginine from L-ornithine and carbamoyl phosphate: step 3/3. This chain is Argininosuccinate lyase, found in Haemophilus influenzae (strain PittEE).